Consider the following 395-residue polypeptide: Probable peptidoglycan glycosyltransferase FtsW (395 aa).

The Cytoplasmic segment spans residues 1–24; that stretch reads MADLAAGVAERGPRLSLWSSLDQR. A helical membrane pass occupies residues 25–45; the sequence is LVWVVAATALLGLVMVASASI. The Periplasmic portion of the chain corresponds to 46–62; the sequence is SMAEQATGDPFYFFKRQ. A helical membrane pass occupies residues 63–83; the sequence is IFFALLGLGMALALLQIPLAT. Residues 84–86 are Cytoplasmic-facing; sequence WER. The helical transmembrane segment at 87–107 threads the bilayer; the sequence is AGPGLLLGALALLVLVLIPGV. Over 108-116 the chain is Periplasmic; the sequence is GREVNGAVR. The chain crosses the membrane as a helical span at residues 117–137; it reads WIPLGVFNLQVAEVVKVLLAL. The Cytoplasmic segment spans residues 138–152; it reads YLAGFLVRRQQQLRT. A helical membrane pass occupies residues 153–173; sequence SMAAFLVPVLVSAACAFLLLL. Over 174–178 the chain is Periplasmic; the sequence is QPDFG. A helical membrane pass occupies residues 179 to 199; sequence TALMLMALAVGLLYLAGAPLW. Position 200 (arginine 200) is a topological domain, cytoplasmic. Residues 201–221 traverse the membrane as a helical segment; it reads FAALVGVLAAAAAALVVYSPY. The Periplasmic portion of the chain corresponds to 222 to 276; sequence RWQRVTAFMDPWSDPFNTGFQLTQSLIAIGRGDWLGVGLGGSVQKLFYLPEAHTD. Residues 277-297 form a helical membrane-spanning segment; that stretch reads FVFSVLAEELGWLGVLAVVLL. The Cytoplasmic portion of the chain corresponds to 298–316; that stretch reads FSYIVWRAMAVGWQCHRHR. Residues 317 to 337 form a helical membrane-spanning segment; the sequence is LPFAGYLAWAVGLALGLQAFI. Residues 338 to 352 lie on the Periplasmic side of the membrane; that stretch reads NMGVATGLLPTKGLT. A helical membrane pass occupies residues 353–373; the sequence is LPLFSYGGSSALATGAMVGLL. Residues 374 to 395 lie on the Cytoplasmic side of the membrane; the sequence is LRCGYELAQARAEGRRPEEAAS.

It belongs to the SEDS family. FtsW subfamily.

It is found in the cell inner membrane. It catalyses the reaction [GlcNAc-(1-&gt;4)-Mur2Ac(oyl-L-Ala-gamma-D-Glu-L-Lys-D-Ala-D-Ala)](n)-di-trans,octa-cis-undecaprenyl diphosphate + beta-D-GlcNAc-(1-&gt;4)-Mur2Ac(oyl-L-Ala-gamma-D-Glu-L-Lys-D-Ala-D-Ala)-di-trans,octa-cis-undecaprenyl diphosphate = [GlcNAc-(1-&gt;4)-Mur2Ac(oyl-L-Ala-gamma-D-Glu-L-Lys-D-Ala-D-Ala)](n+1)-di-trans,octa-cis-undecaprenyl diphosphate + di-trans,octa-cis-undecaprenyl diphosphate + H(+). It functions in the pathway cell wall biogenesis; peptidoglycan biosynthesis. Its function is as follows. Peptidoglycan polymerase that is essential for cell division. This chain is Probable peptidoglycan glycosyltransferase FtsW, found in Halorhodospira halophila (strain DSM 244 / SL1) (Ectothiorhodospira halophila (strain DSM 244 / SL1)).